The primary structure comprises 858 residues: Beta-galactosidase 6 (858 aa).

A signal peptide spans 1–30 (MAAATVGVLLRLLLLPVVVVVSLLVGASRA). Asn-32 carries an N-linked (GlcNAc...) asparagine glycan. The active-site Proton donor is Glu-189. The Nucleophile role is filled by Glu-258. Residues Asn-259, Asn-482, Asn-507, Asn-595, and Asn-830 are each glycosylated (N-linked (GlcNAc...) asparagine). One can recognise an SUEL-type lectin domain in the interval 772 to 858 (QTQGPALRLE…KSLVVEAACS (87 aa)).

This sequence belongs to the glycosyl hydrolase 35 family.

The protein resides in the secreted. It is found in the extracellular space. The protein localises to the apoplast. It carries out the reaction Hydrolysis of terminal non-reducing beta-D-galactose residues in beta-D-galactosides.. In terms of biological role, releases galactose by hydrolysis of plant cell wall galactose-containing polysaccharides such as galacto-xyloglucan, pectic galactan and galactan (in vitro). The polypeptide is Beta-galactosidase 6 (Oryza sativa subsp. japonica (Rice)).